A 325-amino-acid chain; its full sequence is S-adenosylmethionine carrier 1, chloroplastic/mitochondrial (325 aa).

The transit peptide at 1-38 (MAPLTLSVDVKSSSATSHDVSKRVMQSSQLKINKGFFA) directs the protein to the chloroplast and mitochondrion. Solcar repeat units follow at residues 52 to 124 (RTLF…TKQK), 133 to 215 (LSAV…LCLG), and 228 to 310 (ENAL…TKRT). 5 consecutive transmembrane segments (helical) span residues 55–75 (FEGF…LYPI), 97–117 (YSGL…FVGV), 132–152 (HLSA…ASLI), 230–250 (ALIG…LDVI), and 285–305 (GIGP…GVLE).

Belongs to the mitochondrial carrier (TC 2.A.29) family. Expressed in seedlings, cotyledons, leaves and flowers. Lower levels of expression in stems and roots. Not detected in senescent leaves, petals and pollen grains.

It localises to the mitochondrion membrane. Its subcellular location is the plastid. The protein localises to the chloroplast membrane. Its activity is regulated as follows. Inhibited strongly by tannic acid, bromocresol purple, mercuric chloride, mersalyl, p-hydroxymercuribenzoate, S-adenosylhomocysteine, S-adenosylcysteine and adenosylornithine, and to a lesser extent by N-ethylmaleimide, bathophenanthroline and pyridoxal-5'-P. Transporter involved in exchange reactions through membranes. Has a low uniporter activity. Specifically mediates the transport of S-adenosylmethionine (SAM) and its closest analogs. Probably involved in the uptake of SAM in exchange for S-adenosylhomocysteine (SAHC), which is produced from SAM in the mitochondrial matrix and plastidial stroma by methyltransferase activities. The protein is S-adenosylmethionine carrier 1, chloroplastic/mitochondrial (SAMC1) of Arabidopsis thaliana (Mouse-ear cress).